The sequence spans 465 residues: ATP synthase subunit beta (465 aa).

153–160 (GGAGVGKT) serves as a coordination point for ATP.

Belongs to the ATPase alpha/beta chains family. F-type ATPases have 2 components, CF(1) - the catalytic core - and CF(0) - the membrane proton channel. CF(1) has five subunits: alpha(3), beta(3), gamma(1), delta(1), epsilon(1). CF(0) has three main subunits: a(1), b(2) and c(9-12). The alpha and beta chains form an alternating ring which encloses part of the gamma chain. CF(1) is attached to CF(0) by a central stalk formed by the gamma and epsilon chains, while a peripheral stalk is formed by the delta and b chains.

Its subcellular location is the cell membrane. It carries out the reaction ATP + H2O + 4 H(+)(in) = ADP + phosphate + 5 H(+)(out). In terms of biological role, produces ATP from ADP in the presence of a proton gradient across the membrane. The catalytic sites are hosted primarily by the beta subunits. This chain is ATP synthase subunit beta, found in Clostridium perfringens (strain SM101 / Type A).